Consider the following 718-residue polypeptide: Phenylalanine--tRNA ligase beta subunit (718 aa).

The 114-residue stretch at 40-153 folds into the tRNA-binding domain; the sequence is FLNVSKIKFG…KADLKQDPID (114 aa). Residues 387–462 enclose the B5 domain; that stretch reads DKKESFNFVW…RFYGYENLVF (76 aa). Mg(2+) is bound by residues aspartate 440, aspartate 446, glutamate 449, and glutamate 450.

This sequence belongs to the phenylalanyl-tRNA synthetase beta subunit family. Type 1 subfamily. Tetramer of two alpha and two beta subunits. Requires Mg(2+) as cofactor.

It is found in the cytoplasm. The catalysed reaction is tRNA(Phe) + L-phenylalanine + ATP = L-phenylalanyl-tRNA(Phe) + AMP + diphosphate + H(+). The chain is Phenylalanine--tRNA ligase beta subunit from Mycoplasmopsis pulmonis (strain UAB CTIP) (Mycoplasma pulmonis).